Reading from the N-terminus, the 95-residue chain is Probable FAD-linked sulfhydryl oxidase OPG072 (95 aa).

Residues 1–8 (MNPKHWGR) are Intravirion-facing. Residues 1–95 (MNPKHWGRAV…AIDVSKVKPL (95 aa)) enclose the ERV/ALR sulfhydryl oxidase domain. The chain crosses the membrane as a helical span at residues 9-25 (AVWTIIFIVLSQAGLDG). Residues 26–95 (NIEACKRKLY…AIDVSKVKPL (70 aa)) lie on the Virion surface side of the membrane. Residues cysteine 43 and cysteine 46 are joined by a disulfide bond.

It belongs to the orthopoxvirus OPG072 family. Interacts with OPG128; this interaction involves formation of a transient disulfide-bonded intermediate, allowing disulfide bond transfer. It depends on FAD as a cofactor.

The protein resides in the virion membrane. The protein localises to the host cytoplasm. It catalyses the reaction 2 R'C(R)SH + O2 = R'C(R)S-S(R)CR' + H2O2. Its function is as follows. FAD-dependent sulfhydryl oxidase that catalyzes disulfide bond formation. The complete pathway for formation of disulfide bonds in intracellular virion membrane proteins sequentially involves thiol-disulfide transfer between OPG072, OPG128 and OPG088. This is Probable FAD-linked sulfhydryl oxidase OPG072 (OPG072) from Monkeypox virus.